The chain runs to 179 residues: ATP synthase subunit b, chloroplastic (179 aa).

The chain crosses the membrane as a helical span at residues 35–51 (IVILGGGIFKLGSTALS).

The protein belongs to the ATPase B chain family. As to quaternary structure, F-type ATPases have 2 components, F(1) - the catalytic core - and F(0) - the membrane proton channel. F(1) has five subunits: alpha(3), beta(3), gamma(1), delta(1), epsilon(1). F(0) has four main subunits: a(1), b(1), b'(1) and c(10-14). The alpha and beta chains form an alternating ring which encloses part of the gamma chain. F(1) is attached to F(0) by a central stalk formed by the gamma and epsilon chains, while a peripheral stalk is formed by the delta, b and b' chains.

The protein localises to the plastid. It is found in the chloroplast thylakoid membrane. F(1)F(0) ATP synthase produces ATP from ADP in the presence of a proton or sodium gradient. F-type ATPases consist of two structural domains, F(1) containing the extramembraneous catalytic core and F(0) containing the membrane proton channel, linked together by a central stalk and a peripheral stalk. During catalysis, ATP synthesis in the catalytic domain of F(1) is coupled via a rotary mechanism of the central stalk subunits to proton translocation. Functionally, component of the F(0) channel, it forms part of the peripheral stalk, linking F(1) to F(0). In Emiliania huxleyi (Coccolithophore), this protein is ATP synthase subunit b, chloroplastic.